A 55-amino-acid polypeptide reads, in one-letter code: Large ribosomal subunit protein bL33 (55 aa).

This sequence belongs to the bacterial ribosomal protein bL33 family.

The chain is Large ribosomal subunit protein bL33 from Ruegeria pomeroyi (strain ATCC 700808 / DSM 15171 / DSS-3) (Silicibacter pomeroyi).